The sequence spans 185 residues: Ribosome-recycling factor (185 aa).

Belongs to the RRF family.

The protein localises to the cytoplasm. Its function is as follows. Responsible for the release of ribosomes from messenger RNA at the termination of protein biosynthesis. May increase the efficiency of translation by recycling ribosomes from one round of translation to another. The chain is Ribosome-recycling factor from Shewanella loihica (strain ATCC BAA-1088 / PV-4).